Consider the following 743-residue polypeptide: MRATLFCLCLCLLGTVLPTPVSLPARARGNCPGQHQILLKGCNTKHGFYIFQYIYSHLMQKNQTQVKKEEGDHQGTIHGHWLGKVDGEAPGQGAGSSHVPEDKDSPKTHSHITPASKGEGRALRPGIGDSNSVYPTSTSVEGSGDMGSILLGEIINGEDGLPQSTHPGGPHGDGDGGNGVLVDGAVTAGRERASGSEGAGSEGGSHAPVPDQGQAGTMGTGDSAITSVTDSAITSVTKKEDVHVDTEGIDEFAYIPDVDAVTITRGQDGETHISPEDEVKIFIGRANIQVGENDSSVGSAGATSEANVIPTVVTVRPQGHPEESATMATLHHGDSVTSRPVGHPSVGNSGDGATEIHSGQELEAPSPWESTGGDATVTMAVGVQSGKGRSGQRALGKHSLPATMTTRGGRGTASSGLTTGDCSTAASTPSRKGSHVVSAGQGESGEVGTAGPERQRARVQQEVAPARGVVGGMVVPEGHRARVQQEVAPARGVVGGMVVPEGHRARTQPEVASAPSTVGKAAPERHRNRAQQEVAPVPSMVVETVAPERHRARVRPESARLGQAARPEVAPAPSTGGRIVAPGGHRARVWPGAAPAPGVVGVARPAPSKAYNGDKRVAIGKSTDVPRDPWVWGSAHPQAQHTRGSTVAGGFAHLHRGQRLGGLTEMEHSRQVEQVRHADRLRLHERAVYGLSGVGGPLQPPAVHTDPWSADSSQSSEGRWGSHSDSHEEDGEVRGYPYGRQSL.

The first 18 residues, 1–18 (MRATLFCLCLCLLGTVLP), serve as a signal peptide directing secretion. An intrachain disulfide couples Cys-31 to Cys-42. N-linked (GlcNAc...) asparagine glycosylation is present at Asn-62. The segment at 68–225 (KEEGDHQGTI…GTMGTGDSAI (158 aa)) is disordered. The segment covering 129-141 (DSNSVYPTSTSVE) has biased composition (polar residues). Positions 169–179 (GPHGDGDGGNG) are enriched in gly residues. Asn-293 carries N-linked (GlcNAc...) asparagine; partial glycosylation. 6 disordered regions span residues 333 to 356 (GDSV…ATEI), 385 to 454 (SGKG…GPER), 505 to 534 (ARTQ…QQEV), 549 to 577 (RHRA…STGG), 628 to 649 (DPWV…TVAG), and 692 to 743 (SGVG…RQSL). Residues 402 to 420 (ATMTTRGGRGTASSGLTTG) show a composition bias toward low complexity. The span at 421–431 (DCSTAASTPSR) shows a compositional bias: polar residues. The span at 549–558 (RHRARVRPES) shows a compositional bias: basic and acidic residues.

The protein belongs to the osteoregulin family. In terms of processing, asn-62 is fully glycosylated, whereas only less than 10% of Asn-293 seem to be glycosylated. In terms of tissue distribution, in the eggshell, expressed mainly in the palisade and mammillary layers. Expression also detected in the hypertrophic zone of the epiphyseal growth plate, and in cortical and medullary bone (at protein level). Highly expressed in uterus. Not detected in the proximal oviduct, liver, magnum, duodenum and kidney.

The protein localises to the secreted. It is found in the extracellular space. The protein resides in the extracellular matrix. In terms of biological role, major component of the eggshell matrix. May play an important role in the regulation of calcite growth during eggshell calcification. May also regulate the mineralization process in developing and growing bones. This Gallus gallus (Chicken) protein is Ovocleidin-116.